An 805-amino-acid chain; its full sequence is Leucine--tRNA ligase (805 aa).

The 'HIGH' region signature appears at Pro40–His51. The short motif at Lys576–Ser580 is the 'KMSKS' region element. Lys579 is a binding site for ATP.

It belongs to the class-I aminoacyl-tRNA synthetase family.

Its subcellular location is the cytoplasm. The catalysed reaction is tRNA(Leu) + L-leucine + ATP = L-leucyl-tRNA(Leu) + AMP + diphosphate. This is Leucine--tRNA ligase from Chloroherpeton thalassium (strain ATCC 35110 / GB-78).